A 374-amino-acid chain; its full sequence is 4-hydroxy-3-methylbut-2-en-1-yl diphosphate synthase (flavodoxin) (374 aa).

Residues cysteine 272, cysteine 275, cysteine 307, and glutamate 314 each contribute to the [4Fe-4S] cluster site.

The protein belongs to the IspG family. Requires [4Fe-4S] cluster as cofactor.

The catalysed reaction is (2E)-4-hydroxy-3-methylbut-2-enyl diphosphate + oxidized [flavodoxin] + H2O + 2 H(+) = 2-C-methyl-D-erythritol 2,4-cyclic diphosphate + reduced [flavodoxin]. Its pathway is isoprenoid biosynthesis; isopentenyl diphosphate biosynthesis via DXP pathway; isopentenyl diphosphate from 1-deoxy-D-xylulose 5-phosphate: step 5/6. Functionally, converts 2C-methyl-D-erythritol 2,4-cyclodiphosphate (ME-2,4cPP) into 1-hydroxy-2-methyl-2-(E)-butenyl 4-diphosphate. The sequence is that of 4-hydroxy-3-methylbut-2-en-1-yl diphosphate synthase (flavodoxin) from Acidiphilium cryptum (strain JF-5).